A 353-amino-acid polypeptide reads, in one-letter code: Photosystem II D2 protein (353 aa).

At threonine 2 the chain carries N-acetylthreonine. Threonine 2 is modified (phosphothreonine). Residues 41 to 61 (CAYFALGGWFTGTTFVTSWYT) form a helical membrane-spanning segment. Histidine 118 contacts chlorophyll a. A helical transmembrane segment spans residues 125-141 (GFMLRQFELARSVQLRP). Pheophytin a is bound by residues glutamine 130 and asparagine 143. The chain crosses the membrane as a helical span at residues 153–166 (VFVSVFLIYPLGQS). Histidine 198 lines the chlorophyll a pocket. The helical transmembrane segment at 208-228 (AALLCAIHGATVENTLFEDGD) threads the bilayer. Residues histidine 215 and phenylalanine 262 each contribute to the a plastoquinone site. Histidine 215 is a binding site for Fe cation. Residue histidine 269 participates in Fe cation binding. The helical transmembrane segment at 279–295 (GLWMSAIGVVGLALNLR) threads the bilayer.

It belongs to the reaction center PufL/M/PsbA/D family. In terms of assembly, PSII is composed of 1 copy each of membrane proteins PsbA, PsbB, PsbC, PsbD, PsbE, PsbF, PsbH, PsbI, PsbJ, PsbK, PsbL, PsbM, PsbT, PsbX, PsbY, PsbZ, Psb30/Ycf12, at least 3 peripheral proteins of the oxygen-evolving complex and a large number of cofactors. It forms dimeric complexes. Requires The D1/D2 heterodimer binds P680, chlorophylls that are the primary electron donor of PSII, and subsequent electron acceptors. It shares a non-heme iron and each subunit binds pheophytin, quinone, additional chlorophylls, carotenoids and lipids. There is also a Cl(-1) ion associated with D1 and D2, which is required for oxygen evolution. The PSII complex binds additional chlorophylls, carotenoids and specific lipids. as cofactor.

It is found in the plastid. The protein resides in the chloroplast thylakoid membrane. The catalysed reaction is 2 a plastoquinone + 4 hnu + 2 H2O = 2 a plastoquinol + O2. Photosystem II (PSII) is a light-driven water:plastoquinone oxidoreductase that uses light energy to abstract electrons from H(2)O, generating O(2) and a proton gradient subsequently used for ATP formation. It consists of a core antenna complex that captures photons, and an electron transfer chain that converts photonic excitation into a charge separation. The D1/D2 (PsbA/PsbD) reaction center heterodimer binds P680, the primary electron donor of PSII as well as several subsequent electron acceptors. D2 is needed for assembly of a stable PSII complex. This chain is Photosystem II D2 protein, found in Drimys granadensis.